The following is a 100-amino-acid chain: Small ribosomal subunit protein uS14c (100 aa).

This sequence belongs to the universal ribosomal protein uS14 family. In terms of assembly, part of the 30S ribosomal subunit.

The protein resides in the plastid. Its subcellular location is the chloroplast. Its function is as follows. Binds 16S rRNA, required for the assembly of 30S particles. The polypeptide is Small ribosomal subunit protein uS14c (Oltmannsiellopsis viridis (Marine flagellate)).